The following is a 259-amino-acid chain: Undecaprenyl-diphosphatase 4 (259 aa).

8 helical membrane passes run 1–21, 39–59, 71–91, 99–119, 133–153, 174–194, 208–228, and 239–259; these read MNWL…FLPI, AGLF…FIYY, FSKL…IGLL, ISKT…FLYM, ITYK…FPAI, AYFS…LQFV, SLIV…SWMI, and FAYY…TDVF.

It belongs to the UppP family.

It is found in the cell membrane. The catalysed reaction is di-trans,octa-cis-undecaprenyl diphosphate + H2O = di-trans,octa-cis-undecaprenyl phosphate + phosphate + H(+). Its function is as follows. Catalyzes the dephosphorylation of undecaprenyl diphosphate (UPP). Confers resistance to bacitracin. The sequence is that of Undecaprenyl-diphosphatase 4 from Bacillus cereus (strain ZK / E33L).